The sequence spans 702 residues: Pseudouridylate synthase PUS7L (702 aa).

Serine 79 carries the phosphoserine modification. The disordered stretch occupies residues 84-116 (NSEGAADLPGCSDGDRSHQSDSEKENSVNSVTS). Residues 96 to 109 (DGDRSHQSDSEKEN) show a composition bias toward basic and acidic residues. Aspartate 339 serves as the catalytic Nucleophile. The 223-residue stretch at 424-646 (GFVNYYGPQR…PGCYRHIVKH (223 aa)) folds into the TRUD domain.

Belongs to the pseudouridine synthase TruD family.

It carries out the reaction a uridine in mRNA = a pseudouridine in mRNA. Pseudouridine synthase that catalyzes pseudouridylation of mRNAs. In Mus musculus (Mouse), this protein is Pseudouridylate synthase PUS7L.